A 418-amino-acid chain; its full sequence is Staphyloferrin B transporter (418 aa).

10 helical membrane-spanning segments follow: residues 19 to 39 (FIAIAGLTVLVPLLPIYMASL), 49 to 69 (LWSGIAIAAPAVTTMIASPIW), 88 to 108 (GLAVCLFLMALCTTPLQFVLV), 163 to 183 (ILGFSALLMSIAVITFIVCIF), 222 to 242 (FIIVGVLANFAMYGMLTALSP), 257 to 277 (VIGFLQSAFWTASILSAPLWG), 287 to 307 (SVYIFATIACGCSAILQGLAT), 317 to 337 (ILQGLTYSALIQSVMFVVVNA), 353 to 373 (MLVVGQIIGSLSGAAITSYTT), and 377 to 397 (TFIVMGVVFAVSSLFLICSTI).

Belongs to the major facilitator superfamily.

The protein localises to the cell membrane. Its function is as follows. Involved in staphyloferrin B secretion. This is Staphyloferrin B transporter from Staphylococcus aureus (strain NCTC 8325 / PS 47).